The following is a 961-amino-acid chain: Outer capsid protein VP2 (961 aa).

The protein belongs to the orbivirus VP2 family.

It localises to the virion. The VP2 protein is one of the two proteins (with VP5) which constitute the virus particle outer capsid. It is the major target of the host immunogenic response. Responsible for viral attachment to target host cell, probably by binding to sialic acid. This attachment induces virion internalization predominantly through clathrin-dependent endocytosis. This is Outer capsid protein VP2 (Segment-2) from Antilocapra americana (Pronghorn).